Here is a 223-residue protein sequence, read N- to C-terminus: Ribonuclease T (223 aa).

Residues 20–195 (VVIDVETAGF…YDTERTAELF (176 aa)) enclose the Exonuclease domain. Mg(2+) is bound by residues aspartate 23, glutamate 25, histidine 182, and aspartate 187. Histidine 182 functions as the Proton donor/acceptor in the catalytic mechanism.

Belongs to the RNase T family. As to quaternary structure, homodimer. The cofactor is Mg(2+).

Functionally, trims short 3' overhangs of a variety of RNA species, leaving a one or two nucleotide 3' overhang. Responsible for the end-turnover of tRNA: specifically removes the terminal AMP residue from uncharged tRNA (tRNA-C-C-A). Also appears to be involved in tRNA biosynthesis. In Photobacterium profundum (strain SS9), this protein is Ribonuclease T.